The following is a 537-amino-acid chain: Woronin body major protein hexA (537 aa).

Composition is skewed to basic and acidic residues over residues 1 to 17 (MYSV…RDAQ), 59 to 70 (DRTSHVEREDTR), and 116 to 134 (DSRV…RSEN). 4 disordered regions span residues 1–20 (MYSV…QRTA), 59–79 (DRTS…PDPR), 116–200 (DSRV…KPVY), and 269–295 (PKPL…SRPS). The span at 135–144 (NAKQNKNKNN) shows a compositional bias: low complexity. Residues 272 to 281 (LETRKGDSFS) show a composition bias toward basic and acidic residues.

The protein belongs to the eIF-5A family. Hex1 subfamily. As to quaternary structure, forms oligomers. Self-assembles into hexagonal rods. Binds directly or indirectly to the Woronin body tether lah.

The protein resides in the cell septum. Its subcellular location is the cytoplasm. Functionally, major component of Woronin bodies, fungal-specific organelles that occlude septal pores in order to separate intact from damaged compartments. HexA binds directly or indirectly to the Woronin body tether that in turn is anchored at the rim of the septal pore. Woronin bodies are important for stress resistance and virulence. This Aspergillus fumigatus (strain ATCC MYA-4609 / CBS 101355 / FGSC A1100 / Af293) (Neosartorya fumigata) protein is Woronin body major protein hexA.